An 82-amino-acid polypeptide reads, in one-letter code: U10-myrmicitoxin-Mri1c (82 aa).

The first 26 residues, 1–26 (MRLSYVSLTLAIIFVMAIVHAPETEA), serve as a signal peptide directing secretion. The propeptide occupies 27 to 52 (KAYPEADAVGEASAVGEADAVGVADP). Isoleucine 81 is modified (isoleucine amide).

It belongs to the formicidae venom precursor-01 superfamily. As to expression, expressed by the venom gland.

The protein resides in the secreted. Induces paralysis 5 minutes after injection into blowflies (L.caesar). In most cases is not lethal 24 hours after injection, but paralysis is irreversible. May have antimicrobial properties, like most ant linear peptides. This Manica rubida (European giant red ant) protein is U10-myrmicitoxin-Mri1c.